A 1293-amino-acid polypeptide reads, in one-letter code: Putative DNA-directed RNA polymerase 008R (1293 aa).

Positions 61, 64, 71, 74, 99, 102, and 123 each coordinate Zn(2+). The DNA-binding element occupies 270-339; it reads TNRKPMAGIK…PVMVTPFNVS (70 aa). A compositionally biased stretch (basic and acidic residues) spans 354 to 376; it reads EMRDGTVHRPSEWRPSHGDHMET. The tract at residues 354–390 is disordered; the sequence is EMRDGTVHRPSEWRPSHGDHMETADGSPLGRVTRPSY. Mg(2+) is bound by residues Asp-474, Asp-476, and Asp-478. The segment at 724-734 is alpha-amanitin binding; that stretch reads GQQYVGGSRPG. A bridging helix region spans residues 776 to 788; the sequence is PREVFFHAKSGRE.

This sequence belongs to the RNA polymerase beta' chain family.

It carries out the reaction RNA(n) + a ribonucleoside 5'-triphosphate = RNA(n+1) + diphosphate. In terms of biological role, component of the DNA-dependent RNA polymerase that catalyzes the transcription of DNA into RNA using the four ribonucleoside triphosphates as substrates. Largest and catalytic component of RNA polymerase II which synthesizes mRNA precursors and many functional non-coding RNAs. Forms the polymerase active center together with the second largest subunit. This chain is Putative DNA-directed RNA polymerase 008R, found in Frog virus 3 (isolate Goorha) (FV-3).